A 170-amino-acid chain; its full sequence is Large ribosomal subunit protein uL5 (170 aa).

It belongs to the universal ribosomal protein uL5 family. Part of the 50S ribosomal subunit; contacts the 5S rRNA and probably tRNA. Forms a bridge to the 30S subunit in the 70S ribosome.

This is one of the proteins that bind and probably mediate the attachment of the 5S RNA into the large ribosomal subunit, where it forms part of the central protuberance. In the 70S ribosome it contacts protein S13 of the 30S subunit (bridge B1b), connecting the 2 subunits; this bridge is implicated in subunit movement. May contact the P site tRNA; the 5S rRNA and some of its associated proteins might help stabilize positioning of ribosome-bound tRNAs. The protein is Large ribosomal subunit protein uL5 of Thermoplasma volcanium (strain ATCC 51530 / DSM 4299 / JCM 9571 / NBRC 15438 / GSS1).